The primary structure comprises 21 residues: Alpha-fibrinogenase A1 (21 aa).

The protein belongs to the peptidase S1 family. Snake venom subfamily. As to quaternary structure, monomer. Expressed by the venom gland.

It is found in the secreted. Its activity is regulated as follows. Inhibited by PMSF, bovine aprotinin (APR), and soybean trypsin inhibitor (STI). Is not inhibited by EDTA, beta-mercaptoethanol, and high temperature (85 degrees Celsius). Snake venom serine protease that completely cleaves fibrinogen Aalpha chain (FGA), partially cleaves Bbeta chain (FGB) and has no activity on gamma chain. Is more potent that A2 and A3 alpha-fibrinogenases. Very active within 5 minutes. The protein is Alpha-fibrinogenase A1 of Crotalus atrox (Western diamondback rattlesnake).